The sequence spans 363 residues: NAD-dependent epimerase/dehydratase tndE (363 aa).

Residues 10–30 traverse the membrane as a helical segment; the sequence is GLVLITGVNGFLASHLALQLI. Tyr-176 is an NADP(+) binding site.

It belongs to the NAD(P)-dependent epimerase/dehydratase family. Dihydroflavonol-4-reductase subfamily.

The protein localises to the membrane. It participates in secondary metabolite biosynthesis; terpenoid biosynthesis. In terms of biological role, NAD-dependent epimerase/dehydratase; part of the gene cluster that mediates the biosynthesis of talaronoid C, a fusicoccane diterpenoid with an unprecedented tricyclic 5/8/6 ring system. The first step in the pathway is performed by the fusicoccadiene synthase tndC that possesses both prenyl transferase and terpene cyclase activity, converting isopentenyl diphosphate and dimethylallyl diphosphate into geranylgeranyl diphosphate (GGDP) and further converting GGDP into talarodiene, a precursor for talaronoid C. The remaining enzymes from the cluster include the cytochrome P450 monooxygenase tndB, the aldehyde reductase tndE and the alcohol dehydrogenase tndF that are involved in the conversion of talarodiene into talaronoid C. This chain is NAD-dependent epimerase/dehydratase tndE, found in Aspergillus flavipes.